Consider the following 457-residue polypeptide: Paired box protein Pax-8 (457 aa).

Residues 9–135 constitute a DNA-binding region (paired); sequence GHGGLNQLGG…SSINRIIRTK (127 aa). Residues 12 to 68 are PAI subdomain; the sequence is GLNQLGGAFVNGRPLPEVVRQRIVDLAHQGVRPCDISRQLRVSHGCVSKILGRYYET. The tract at residues 87 to 135 is RED subdomain; sequence KVVEKIGDYKRQNPTMFAWEIRDRLLAEGVCDNDTVPSVSSINRIIRTK. Positions 159 to 182 are enriched in polar residues; the sequence is LIPSSAVTPPESPQSDSLGSTYSI. The tract at residues 159 to 224 is disordered; it reads LIPSSAVTPP…SSSSGPRKHL (66 aa). Ser-304 bears the Phosphoserine mark.

In terms of assembly, interacts with WWTR1. In terms of tissue distribution, expressed in the developing excretory system and the thyroid gland.

It localises to the nucleus. Thought to encode a transcription factor. It may have a role in kidney cell differentiation. May play a regulatory role in mammalian development. This chain is Paired box protein Pax-8 (Pax8), found in Mus musculus (Mouse).